The chain runs to 401 residues: MSKRSLSSLGAEDLCGKRVLVRVDFNVPLGDEGLITDDTRIRAALPTINDLLDKSARVILSAHFGRPKGQVNETMRLTAVAQRLSELLGKTVVKTESCIGAEAKSKVDAMSNGDVVLLENVRFISGEEKNDTEFAKELASLAEVYVNDAFGAAHRAHASTEGVTKFLSPCVAGYLMEKELKYLQGAIDQPQSPLAAIVGGSKVSSKIGVLESLIDKCDKIIVGGGMIFTFYKARGLSVGNSLVEEDKLELASALEKKAQEKGVEFLLPTDVVLADNFSPDANSKLSKVDAISEGWMGLDIGSESVELFQNALKDCKTVIWNGPMGVFEFEKFANGTNAIANTLAELSAQGCCTIIGGGDSVAAVEKAGLAKKMSHISTGGGASLELLEGKVLPGVSALDDA.

Residues 24–26 (DFN), Arg40, 63–66 (HFGR), Arg122, and Arg155 contribute to the substrate site. Residues Lys206, Gly297, Glu328, and 357 to 360 (GGDS) contribute to the ATP site.

It belongs to the phosphoglycerate kinase family. As to quaternary structure, monomer.

Its subcellular location is the cytoplasm. It catalyses the reaction (2R)-3-phosphoglycerate + ATP = (2R)-3-phospho-glyceroyl phosphate + ADP. It functions in the pathway carbohydrate degradation; glycolysis; pyruvate from D-glyceraldehyde 3-phosphate: step 2/5. The chain is Phosphoglycerate kinase from Prochlorococcus marinus (strain NATL2A).